Here is a 156-residue protein sequence, read N- to C-terminus: Small ribosomal subunit protein uS7 (156 aa).

Belongs to the universal ribosomal protein uS7 family. In terms of assembly, part of the 30S ribosomal subunit. Contacts proteins S9 and S11.

One of the primary rRNA binding proteins, it binds directly to 16S rRNA where it nucleates assembly of the head domain of the 30S subunit. Is located at the subunit interface close to the decoding center, probably blocks exit of the E-site tRNA. In Nitrosomonas europaea (strain ATCC 19718 / CIP 103999 / KCTC 2705 / NBRC 14298), this protein is Small ribosomal subunit protein uS7.